The chain runs to 269 residues: Shikimate dehydrogenase (NADP(+)) (269 aa).

Shikimate-binding positions include 17-19 (SKS) and threonine 64. The active-site Proton acceptor is the lysine 68. Glutamate 80 contributes to the NADP(+) binding site. Shikimate is bound by residues asparagine 89 and aspartate 105. NADP(+) is bound by residues 130–134 (GAGGA), 154–159 (NRTRAK), and methionine 213. Residue tyrosine 215 participates in shikimate binding. Residue glycine 237 coordinates NADP(+).

It belongs to the shikimate dehydrogenase family. Homodimer.

It carries out the reaction shikimate + NADP(+) = 3-dehydroshikimate + NADPH + H(+). Its pathway is metabolic intermediate biosynthesis; chorismate biosynthesis; chorismate from D-erythrose 4-phosphate and phosphoenolpyruvate: step 4/7. Its function is as follows. Involved in the biosynthesis of the chorismate, which leads to the biosynthesis of aromatic amino acids. Catalyzes the reversible NADPH linked reduction of 3-dehydroshikimate (DHSA) to yield shikimate (SA). In Neisseria lactamica, this protein is Shikimate dehydrogenase (NADP(+)).